We begin with the raw amino-acid sequence, 86 residues long: Sodium channel neurotoxin MeuNaTxalpha-4 (86 aa).

The N-terminal stretch at 1 to 19 is a signal peptide; it reads MNYLILISFALLVITGVES. The 65-residue stretch at 21–85 folds into the LCN-type CS-alpha/beta domain; the sequence is RDAYIAKPHN…VPIRIPGKCH (65 aa). Intrachain disulfides connect Cys-31–Cys-84, Cys-35–Cys-57, Cys-43–Cys-67, and Cys-47–Cys-69. Residue Arg-86 is a propeptide, removed by a carboxypeptidase.

It belongs to the long (4 C-C) scorpion toxin superfamily. Sodium channel inhibitor family. Alpha subfamily. In terms of tissue distribution, expressed by the venom gland.

It localises to the secreted. Alpha toxins bind voltage-independently at site-3 of sodium channels (Nav) and inhibit the inactivation of the activated channels, thereby blocking neuronal transmission. This toxin inhibits inactivation of drosophila DmNav1 (EC(50)=130 nM). The chain is Sodium channel neurotoxin MeuNaTxalpha-4 from Mesobuthus eupeus (Lesser Asian scorpion).